The primary structure comprises 737 residues: SANT and BTB domain regulator of class switch recombination (737 aa).

The SANT domain occupies 21-59 (DMILYPLIGIPQTINWETVARLVPGLTPKECVKRFDELK). The BTB domain occupies 147-255 (MVIHVCDEAK…QCIQYCHKNM (109 aa)). Over residues 555 to 576 (SEEEEYTTGSEVTEDEVGDEEE) the composition is skewed to acidic residues. The segment at 555–618 (SEEEEYTTGS…TLEKSTSRDV (64 aa)) is disordered. A compositionally biased stretch (basic residues) spans 580–595 (KQRKKEKPKKFTKPPK). Basic and acidic residues predominate over residues 604–615 (QKKEKTLEKSTS).

The protein belongs to the KIAA1841 family. In terms of assembly, homodimer. Interacts (via the BTB domain) with HDAC1 and NCOR2.

Negatively regulates class switch recombination or isotype switching in splenic B-cells. This is SANT and BTB domain regulator of class switch recombination from Rattus norvegicus (Rat).